The sequence spans 100 residues: Large ribosomal subunit protein uL23 (100 aa).

Belongs to the universal ribosomal protein uL23 family. In terms of assembly, part of the 50S ribosomal subunit. Contacts protein L29, and trigger factor when it is bound to the ribosome.

In terms of biological role, one of the early assembly proteins it binds 23S rRNA. One of the proteins that surrounds the polypeptide exit tunnel on the outside of the ribosome. Forms the main docking site for trigger factor binding to the ribosome. The sequence is that of Large ribosomal subunit protein uL23 from Aeromonas hydrophila subsp. hydrophila (strain ATCC 7966 / DSM 30187 / BCRC 13018 / CCUG 14551 / JCM 1027 / KCTC 2358 / NCIMB 9240 / NCTC 8049).